Here is an 88-residue protein sequence, read N- to C-terminus: Sigma-conotoxin GVIIIA (88 aa).

Positions 1-20 (MMSKMGAMFVLLLLFTLASS) are cleaved as a signal peptide. Residues 21–46 (LQEGDVQARKTRLKSDFYRALARDDR) constitute a propeptide that is removed on maturation. Pro55 carries the 4-hydroxyproline modification. At Trp80 the chain carries 6'-bromotryptophan. A Serine amide modification is found at Ser87.

The protein belongs to the conotoxin S superfamily. Contains 5 disulfide bonds. Expressed by the venom duct.

It localises to the secreted. Its function is as follows. Sigma-conotoxins bind and inhibit serotonin-gated ion channels. This peptide selectively and reversibly inhibits 5-hydroxytryptamine 3 receptor (HTR3A) through competitive antagonism (IC(50)=53-86.8 nM). The protein is Sigma-conotoxin GVIIIA of Conus geographus (Geography cone).